Consider the following 639-residue polypeptide: Chaperone protein DnaK (639 aa).

Thr-198 is modified (phosphothreonine; by autocatalysis). The span at 603 to 618 (AKAQTQGGAQEGAAKQ) shows a compositional bias: low complexity. The tract at residues 603-639 (AKAQTQGGAQEGAAKQSNATADDVVDAEFEEVKDDKK) is disordered. The span at 625–639 (DVVDAEFEEVKDDKK) shows a compositional bias: acidic residues.

Belongs to the heat shock protein 70 family.

Acts as a chaperone. In Shewanella sp. (strain MR-4), this protein is Chaperone protein DnaK.